Here is a 171-residue protein sequence, read N- to C-terminus: Small ribosomal subunit protein uS5 (171 aa).

The region spanning 16–79 is the S5 DRBM domain; that stretch reads LIEKIVFINR…ERARKDMALV (64 aa).

The protein belongs to the universal ribosomal protein uS5 family. Part of the 30S ribosomal subunit. Contacts proteins S4 and S8.

In terms of biological role, with S4 and S12 plays an important role in translational accuracy. Located at the back of the 30S subunit body where it stabilizes the conformation of the head with respect to the body. The chain is Small ribosomal subunit protein uS5 from Desulfotalea psychrophila (strain LSv54 / DSM 12343).